Reading from the N-terminus, the 322-residue chain is Protein-L-isoaspartate O-methyltransferase (322 aa).

The tract at residues 1–101 is disordered; the sequence is MSGERAKRFP…AKQGDRSAAP (101 aa). A compositionally biased stretch (basic and acidic residues) spans 14 to 29; sequence EDLKREPRKPEGRVAE. Composition is skewed to low complexity over residues 33–51 and 76–91; these read AGDAARQRLTAAAAVPAAA and HAPAAPGAAKRAPQGG. Ser170 is an active-site residue.

Belongs to the methyltransferase superfamily. L-isoaspartyl/D-aspartyl protein methyltransferase family.

The protein resides in the cytoplasm. The enzyme catalyses [protein]-L-isoaspartate + S-adenosyl-L-methionine = [protein]-L-isoaspartate alpha-methyl ester + S-adenosyl-L-homocysteine. Catalyzes the methyl esterification of L-isoaspartyl residues in peptides and proteins that result from spontaneous decomposition of normal L-aspartyl and L-asparaginyl residues. It plays a role in the repair and/or degradation of damaged proteins. The chain is Protein-L-isoaspartate O-methyltransferase from Burkholderia mallei (strain NCTC 10247).